A 748-amino-acid polypeptide reads, in one-letter code: Rho GTPase-activating protein 24 (748 aa).

Residues 1–20 form a disordered region; sequence MEENNDSTENPQQGQGRQNA. Positions 7 to 18 are enriched in polar residues; sequence STENPQQGQGRQ. One can recognise a PH domain in the interval 19–125; that stretch reads NAIKCGWLRK…WVKSIRRVIW (107 aa). The region spanning 135–329 is the Rho-GAP domain; the sequence is QKLEDTVRYE…VMISKHDCLF (195 aa). 2 disordered regions span residues 354–476 and 582–641; these read TMGQ…GTHS and DFFG…SSNH. 2 stretches are compositionally biased toward polar residues: residues 356–374 and 382–405; these read GQLQ…SRQC and PQRS…SPKN. A phosphoserine mark is found at S369, S391, S396, S398, S402, S413, S415, and S437. Polar residues predominate over residues 432 to 476; it reads IVTNGSFSSSNAEGLEKTQTTPNGSLQARRSSSLKVSGTKMGTHS. T452 carries the phosphothreonine modification. Residues 600 to 615 are compositionally biased toward basic and acidic residues; sequence DLSHPRDYESKSDHRS. Residues 617 to 641 are compositionally biased toward low complexity; that stretch reads GGRSSRATSSSDNSETFVGNSSSNH. Positions 649 to 729 form a coiled coil; it reads SSLKQEMTKQ…KEMEQFFSTF (81 aa).

As to quaternary structure, interacts with FLNA. Post-translationally, phosphorylated by ROCK, leading to activate the RacGAP activity. As to expression, isoform 1 is widely expressed with a higher level in kidney. Isoform 2 is mainly expressed in endothelial cells.

It is found in the cytoplasm. The protein resides in the cytoskeleton. The protein localises to the cell junction. It localises to the adherens junction. Its subcellular location is the focal adhesion. It is found in the cell projection. Rho GTPase-activating protein involved in cell polarity, cell morphology and cytoskeletal organization. Acts as a GTPase activator for the Rac-type GTPase by converting it to an inactive GDP-bound state. Controls actin remodeling by inactivating Rac downstream of Rho leading to suppress leading edge protrusion and promotes cell retraction to achieve cellular polarity. Able to suppress RAC1 and CDC42 activity in vitro. Overexpression induces cell rounding with partial or complete disruption of actin stress fibers and formation of membrane ruffles, lamellipodia, and filopodia. Isoform 2 is a vascular cell-specific GAP involved in modulation of angiogenesis. The chain is Rho GTPase-activating protein 24 (ARHGAP24) from Homo sapiens (Human).